The primary structure comprises 163 residues: NADH-quinone oxidoreductase subunit I (163 aa).

4Fe-4S ferredoxin-type domains lie at 53-83 (LRRY…IEAG) and 94-123 (TLYD…LTPE). [4Fe-4S] cluster-binding residues include Cys63, Cys66, Cys69, Cys73, Cys103, Cys106, Cys109, and Cys113.

This sequence belongs to the complex I 23 kDa subunit family. NDH-1 is composed of 14 different subunits. Subunits NuoA, H, J, K, L, M, N constitute the membrane sector of the complex. The cofactor is [4Fe-4S] cluster.

Its subcellular location is the cell inner membrane. The catalysed reaction is a quinone + NADH + 5 H(+)(in) = a quinol + NAD(+) + 4 H(+)(out). Functionally, NDH-1 shuttles electrons from NADH, via FMN and iron-sulfur (Fe-S) centers, to quinones in the respiratory chain. The immediate electron acceptor for the enzyme in this species is believed to be ubiquinone. Couples the redox reaction to proton translocation (for every two electrons transferred, four hydrogen ions are translocated across the cytoplasmic membrane), and thus conserves the redox energy in a proton gradient. This is NADH-quinone oxidoreductase subunit I from Coxiella burnetii (strain Dugway 5J108-111).